The sequence spans 183 residues: UPF0397 protein EAT1b_2102 (183 aa).

5 helical membrane-spanning segments follow: residues 9–29 (IVAT…AAIP), 42–62 (AFLA…IGLI), 74–94 (SPWW…GLIA), 117–137 (AVVQ…LIYA), and 147–167 (GAVA…LLLV).

This sequence belongs to the UPF0397 family.

The protein localises to the cell membrane. This is UPF0397 protein EAT1b_2102 from Exiguobacterium sp. (strain ATCC BAA-1283 / AT1b).